Reading from the N-terminus, the 305-residue chain is uncharacterized protein (305 aa).

The helical transmembrane segment at 8-28 threads the bilayer; it reads IGALVTAVIAIGIVFSHMILF.

It is found in the membrane. This is an uncharacterized protein from Bacillus subtilis (strain 168).